The following is a 92-amino-acid chain: SPbeta prophage-derived uncharacterized protein YoqM (92 aa).

Positions Met1 to Ala25 are cleaved as a signal peptide.

This chain is SPbeta prophage-derived uncharacterized protein YoqM (yoqM), found in Bacillus subtilis (strain 168).